Reading from the N-terminus, the 267-residue chain is 3-methyl-2-oxobutanoate hydroxymethyltransferase (267 aa).

D46 and D85 together coordinate Mg(2+). 3-methyl-2-oxobutanoate contacts are provided by residues D46–S47, D85, and K115. Residue E117 participates in Mg(2+) binding. The active-site Proton acceptor is E184.

This sequence belongs to the PanB family. In terms of assembly, homodecamer; pentamer of dimers. The cofactor is Mg(2+).

The protein resides in the cytoplasm. It catalyses the reaction 3-methyl-2-oxobutanoate + (6R)-5,10-methylene-5,6,7,8-tetrahydrofolate + H2O = 2-dehydropantoate + (6S)-5,6,7,8-tetrahydrofolate. It participates in cofactor biosynthesis; (R)-pantothenate biosynthesis; (R)-pantoate from 3-methyl-2-oxobutanoate: step 1/2. Catalyzes the reversible reaction in which hydroxymethyl group from 5,10-methylenetetrahydrofolate is transferred onto alpha-ketoisovalerate to form ketopantoate. This is 3-methyl-2-oxobutanoate hydroxymethyltransferase from Geotalea daltonii (strain DSM 22248 / JCM 15807 / FRC-32) (Geobacter daltonii).